The primary structure comprises 551 residues: Dihydroxy-acid dehydratase (551 aa).

[2Fe-2S] cluster is bound at residue Cys-52. Asp-84 lines the Mg(2+) pocket. Cys-125 serves as a coordination point for [2Fe-2S] cluster. Mg(2+) contacts are provided by Asp-126 and Lys-127. An N6-carboxylysine modification is found at Lys-127. Position 197 (Cys-197) interacts with [2Fe-2S] cluster. Residue Glu-448 coordinates Mg(2+). The active-site Proton acceptor is Ser-474.

It belongs to the IlvD/Edd family. Homodimer. The cofactor is [2Fe-2S] cluster. It depends on Mg(2+) as a cofactor.

It catalyses the reaction (2R)-2,3-dihydroxy-3-methylbutanoate = 3-methyl-2-oxobutanoate + H2O. The enzyme catalyses (2R,3R)-2,3-dihydroxy-3-methylpentanoate = (S)-3-methyl-2-oxopentanoate + H2O. It functions in the pathway amino-acid biosynthesis; L-isoleucine biosynthesis; L-isoleucine from 2-oxobutanoate: step 3/4. Its pathway is amino-acid biosynthesis; L-valine biosynthesis; L-valine from pyruvate: step 3/4. Functions in the biosynthesis of branched-chain amino acids. Catalyzes the dehydration of (2R,3R)-2,3-dihydroxy-3-methylpentanoate (2,3-dihydroxy-3-methylvalerate) into 2-oxo-3-methylpentanoate (2-oxo-3-methylvalerate) and of (2R)-2,3-dihydroxy-3-methylbutanoate (2,3-dihydroxyisovalerate) into 2-oxo-3-methylbutanoate (2-oxoisovalerate), the penultimate precursor to L-isoleucine and L-valine, respectively. This Francisella tularensis subsp. tularensis (strain FSC 198) protein is Dihydroxy-acid dehydratase.